We begin with the raw amino-acid sequence, 150 residues long: Large ribosomal subunit protein bL9 (150 aa).

The protein belongs to the bacterial ribosomal protein bL9 family.

Functionally, binds to the 23S rRNA. The protein is Large ribosomal subunit protein bL9 of Corynebacterium glutamicum (strain ATCC 13032 / DSM 20300 / JCM 1318 / BCRC 11384 / CCUG 27702 / LMG 3730 / NBRC 12168 / NCIMB 10025 / NRRL B-2784 / 534).